Consider the following 306-residue polypeptide: Agmatinase (306 aa).

The Mn(2+) site is built by His126, Asp149, His151, Asp153, Asp230, and Asp232.

This sequence belongs to the arginase family. Agmatinase subfamily. The cofactor is Mn(2+).

It catalyses the reaction agmatine + H2O = urea + putrescine. It functions in the pathway amine and polyamine biosynthesis; putrescine biosynthesis via agmatine pathway; putrescine from agmatine: step 1/1. Its function is as follows. Catalyzes the formation of putrescine from agmatine. The chain is Agmatinase from Citrobacter koseri (strain ATCC BAA-895 / CDC 4225-83 / SGSC4696).